Here is a 1086-residue protein sequence, read N- to C-terminus: Tudor domain-containing protein 7 (1086 aa).

2 consecutive HTH OST-type domains span residues 3–76 (EADL…YAVA) and 222–291 (KMDE…YPAR). Basic and acidic residues predominate over residues 295–306 (PLKSDQDPEKEL). The disordered stretch occupies residues 295–324 (PLKSDQDPEKELPPPPPAPKQEVPSQGSPA). The region spanning 325–394 (VMPDVKEKVA…TQKAILYAKL (70 aa)) is the HTH OST-type 3 domain. Tudor domains lie at 501 to 558 (TVHV…FCSL) and 691 to 748 (LPFC…FLQE). Positions 844-866 (AASSPGNRNGGTPAPGSPAESLR) are disordered. Serine 847 carries the post-translational modification Phosphoserine. Residues 849–1086 (GNRNGGTPAP…QYLLELSKVN (238 aa)) form an interaction with CDK17 region. The segment at 881–1086 (TSSFSLEELP…QYLLELSKVN (206 aa)) is interaction with CABLES1.

Belongs to the TDRD7 family. In terms of assembly, found in a mRNP complex, at least composed of TDRD1, TDRD6, TDRD7 and DDX4. Found in a complex containing CABLES1, CDK16 and CDK17. Interacts with CABLES1, CDK17 and PIWIL1. As to expression, mainly expressed in testis. Expressed in spermatogonia, spermatocytes and round spermatids (at protein level). Also expressed in the developing lens.

It localises to the cytoplasm. Component of specific cytoplasmic RNA granules involved in post-transcriptional regulation of specific genes: probably acts by binding to specific mRNAs and regulating their translation. Required for lens transparency during lens development, by regulating translation of genes such as CRYBB3 and HSPB1 in the developing lens. Also required during spermatogenesis. This chain is Tudor domain-containing protein 7 (Tdrd7), found in Mus musculus (Mouse).